The chain runs to 362 residues: DNA replication and repair protein RecF (362 aa).

Gly-30 to Ser-37 lines the ATP pocket.

Belongs to the RecF family.

The protein localises to the cytoplasm. In terms of biological role, the RecF protein is involved in DNA metabolism; it is required for DNA replication and normal SOS inducibility. RecF binds preferentially to single-stranded, linear DNA. It also seems to bind ATP. In Thermoanaerobacter sp. (strain X514), this protein is DNA replication and repair protein RecF.